Consider the following 997-residue polypeptide: Protein translocase subunit SecA (997 aa).

ATP-binding positions include Q84, 102–106, and D582; that span reads GEGKT. The segment at 950-997 is disordered; that stretch reads PYVPVPEAKPEPSEVFGVERKRATPPPQPGLSRAERRRLMRQEKKRKK. The segment covering 957–971 has biased composition (basic and acidic residues); that stretch reads AKPEPSEVFGVERKR. Residues 984–997 show a composition bias toward basic residues; it reads ERRRLMRQEKKRKK.

It belongs to the SecA family. As to quaternary structure, monomer and homodimer. Part of the essential Sec protein translocation apparatus which comprises SecA, SecYEG and auxiliary proteins SecDF. Other proteins may also be involved.

It is found in the cell inner membrane. It localises to the cytoplasm. The catalysed reaction is ATP + H2O + cellular proteinSide 1 = ADP + phosphate + cellular proteinSide 2.. Part of the Sec protein translocase complex. Interacts with the SecYEG preprotein conducting channel. Has a central role in coupling the hydrolysis of ATP to the transfer of proteins into and across the cell membrane, serving as an ATP-driven molecular motor driving the stepwise translocation of polypeptide chains across the membrane. This Thermus thermophilus (strain ATCC BAA-163 / DSM 7039 / HB27) protein is Protein translocase subunit SecA.